The primary structure comprises 538 residues: uncharacterized protein (538 aa).

The span at 1 to 13 (MYNNNSSTSSDSS) shows a compositional bias: low complexity. The tract at residues 1–43 (MYNNNSSTSSDSSNSEEKANAQHASSTDSTSEHTDPAVADEGF) is disordered. A run of 12 helical transmembrane segments spans residues 97 to 117 (ILHV…SSVF), 134 to 154 (VALL…ILWA), 163 to 183 (KIPL…VAVA), 194 to 214 (FFSG…FADM), 226 to 246 (IFAC…GFLA), 254 to 274 (WTEY…LFMK), 328 to 348 (PIVF…YLLL), 367 to 387 (ALPY…IAYF), 408 to 428 (LPPM…LAWS), 434 to 454 (VHWI…LTIF), 458 to 478 (LIYL…ANTI), and 504 to 524 (GSLL…FFIF).

It belongs to the major facilitator superfamily. CAR1 family.

Its subcellular location is the endoplasmic reticulum. It localises to the membrane. This is an uncharacterized protein from Schizosaccharomyces pombe (strain 972 / ATCC 24843) (Fission yeast).